Here is a 344-residue protein sequence, read N- to C-terminus: Membrane progestin receptor delta (344 aa).

The Cytoplasmic segment spans residues 1-51; sequence MLSLKLPQLLQVHQVPRVFWEDGIMSGYRRPTSSALDCVLSSFQMTNETVN. Residues 52-72 traverse the membrane as a helical segment; sequence IWTHFLPTWYFLWRLLALAGG. Topologically, residues 73–83 are extracellular; that stretch reads PGFRAEPYHWP. The helical transmembrane segment at 84–104 threads the bilayer; sequence LLVFLLPACLYPFASCCAHTF. Over 105-113 the chain is Cytoplasmic; the sequence is SSMSPRMRH. The chain crosses the membrane as a helical span at residues 114–134; that stretch reads ICYFLDYGALSLYSLGCAFPY. Residues 135–147 are Extracellular-facing; that stretch reads AAYSMPASWLHGH. The chain crosses the membrane as a helical span at residues 148-168; the sequence is LHQFFVPAAALNSFLCTGLSC. At 169 to 217 the chain is on the cytoplasmic side; it reads YSRFLELESPGLSKVLRTGAFAYPFLFDNLPLFYRLGLCWGRGHGCGQE. A helical transmembrane segment spans residues 218–238; that stretch reads ALSTSHGYHLFCALLTGFLFA. Residues 239-258 lie on the Extracellular side of the membrane; that stretch reads SHLPERLAPGRFDYIGHSHQ. The helical transmembrane segment at 259–279 threads the bilayer; sequence LFHICAVLGTHFQLEAVLADM. Residues 280-292 lie on the Cytoplasmic side of the membrane; that stretch reads GSRRAWLATQEPA. Residues 293–313 form a helical membrane-spanning segment; sequence LGLAGTVATLVLAAAGNLLII. Topologically, residues 314–344 are extracellular; the sequence is AAFTATLLRAPSTCPLLQGGPLEGGTQAKQQ.

Belongs to the ADIPOR family. Homodimer. In terms of tissue distribution, brain specific. Highly expressed in the hypothalamus, also expressed in forebrain, amygdala, corpus callosum and spinal cord.

It is found in the cell membrane. Plasma membrane progesterone (P4) receptor coupled to G proteins. Seems to act through a G(s) mediated pathway. Involved in neurosteroid inhibition of apoptosis. May be involved in regulating rapid P4 signaling in the nervous system. Also binds dehydroepiandrosterone (DHEA), pregnanolone, pregnenolone and allopregnanolone. The sequence is that of Membrane progestin receptor delta from Homo sapiens (Human).